Here is a 164-residue protein sequence, read N- to C-terminus: 2S albumin seed storage protein PINP1 (164 aa).

The first 29 residues, 1–29 (MGVFSSPMSTLRWVTLFAALLSLLEWGTA), serve as a signal peptide directing secretion. Residues 92 to 107 (DQSQSYDSSTDSDSQD) are compositionally biased toward low complexity. Residues 92–137 (DQSQSYDSSTDSDSQDGAPLNQRRRRRGEGRGREEEEAVERAEELP) form a disordered region. Over residues 120–137 (EGRGREEEEAVERAEELP) the composition is skewed to basic and acidic residues. N-linked (GalNAc...) asparagine glycosylation occurs at Asn-138.

It belongs to the 2S seed storage albumins family.

This is 2S albumin seed storage protein PINP1 from Pinus pinea (Italian stone pine).